The following is an 86-amino-acid chain: Putative defensin-like protein 244 (86 aa).

The first 22 residues, Met-1–Ala-22, serve as a signal peptide directing secretion. Disulfide bonds link Cys-28-Cys-83, Cys-38-Cys-67, Cys-48-Cys-77, and Cys-65-Cys-79.

This sequence belongs to the DEFL family.

It is found in the secreted. In Arabidopsis thaliana (Mouse-ear cress), this protein is Putative defensin-like protein 244 (SCRL11).